Here is a 278-residue protein sequence, read N- to C-terminus: Elongation factor Ts (278 aa).

Residues Thr-80–Val-83 form an involved in Mg(2+) ion dislocation from EF-Tu region.

It belongs to the EF-Ts family.

It is found in the cytoplasm. Its function is as follows. Associates with the EF-Tu.GDP complex and induces the exchange of GDP to GTP. It remains bound to the aminoacyl-tRNA.EF-Tu.GTP complex up to the GTP hydrolysis stage on the ribosome. The protein is Elongation factor Ts of Micrococcus luteus (strain ATCC 4698 / DSM 20030 / JCM 1464 / CCM 169 / CCUG 5858 / IAM 1056 / NBRC 3333 / NCIMB 9278 / NCTC 2665 / VKM Ac-2230) (Micrococcus lysodeikticus).